The following is a 417-amino-acid chain: Glucose-1-phosphate adenylyltransferase (417 aa).

Alpha-D-glucose 1-phosphate is bound by residues Tyr98, Gly163, 178–179 (EK), and Ser197.

The protein belongs to the bacterial/plant glucose-1-phosphate adenylyltransferase family. Homotetramer.

It catalyses the reaction alpha-D-glucose 1-phosphate + ATP + H(+) = ADP-alpha-D-glucose + diphosphate. The protein operates within glycan biosynthesis; glycogen biosynthesis. Involved in the biosynthesis of ADP-glucose, a building block required for the elongation reactions to produce glycogen. Catalyzes the reaction between ATP and alpha-D-glucose 1-phosphate (G1P) to produce pyrophosphate and ADP-Glc. The sequence is that of Glucose-1-phosphate adenylyltransferase from Koribacter versatilis (strain Ellin345).